The chain runs to 544 residues: 4-coumarate--CoA ligase 1 (544 aa).

Positions 190, 191, 192, 193, 194, and 198 each coordinate ATP. Residue Y240 participates in (E)-4-coumaroyl-AMP binding. CoA is bound at residue K261. Positions 263–332 (DIVPFLELIQ…AKFPNAKLGQ (70 aa)) are SBD1. (E)-4-coumaroyl-AMP is bound by residues A310, Q332, G333, T337, and M345. Residues Q332, G333, and T337 each contribute to the ATP site. Residues 333–400 (GYGMTEAGPV…IRGDQIMKGY (68 aa)) form an SBD2 region. Residues D421 and R436 each contribute to the ATP site. (E)-4-coumaroyl-AMP is bound by residues K438 and K442. Residues K444 and G445 each coordinate CoA. An ATP-binding site is contributed by K527.

It belongs to the ATP-dependent AMP-binding enzyme family. Requires Mg(2+) as cofactor.

It catalyses the reaction (E)-4-coumarate + ATP + CoA = (E)-4-coumaroyl-CoA + AMP + diphosphate. It carries out the reaction (E)-4-coumarate + ATP + H(+) = (E)-4-coumaroyl-AMP + diphosphate. The catalysed reaction is (E)-4-coumaroyl-AMP + CoA = (E)-4-coumaroyl-CoA + AMP + H(+). It participates in phytoalexin biosynthesis; 3,4',5-trihydroxystilbene biosynthesis; 3,4',5-trihydroxystilbene from trans-4-coumarate: step 1/2. Its function is as follows. Carboxylate--CoA ligase that may use 4-coumarate as substrate. Follows a two-step reaction mechanism, wherein the carboxylate substrate first undergoes adenylation by ATP, followed by a thioesterification in the presence of CoA to yield the final CoA thioester. The sequence is that of 4-coumarate--CoA ligase 1 (4CL1) from Petroselinum crispum (Parsley).